The sequence spans 200 residues: MIAFVRGQVAAVTLSSAVLEVGGVGLDIMCTPGTLATLRVGQQAALPTSMVVREDSLTLFGFADEDEKQTFELLQTASGVGPKLAQAMLAVLSTDDLRLAITGDDVKTLTRVPGIGQKGAQRIILELRDRIGAPTGAGRSAGVPAPAGAVWRDQVHQGLVGLGWPVRDAEKAVAAVAPEAGDVPDVAALLRAALRTLSKA.

Positions 1–63 (MIAFVRGQVA…EDSLTLFGFA (63 aa)) are domain I. Positions 64–142 (DEDEKQTFEL…APTGAGRSAG (79 aa)) are domain II. The flexible linker stretch occupies residues 142–146 (GVPAP). Residues 147–200 (AGAVWRDQVHQGLVGLGWPVRDAEKAVAAVAPEAGDVPDVAALLRAALRTLSKA) are domain III.

It belongs to the RuvA family. As to quaternary structure, homotetramer. Forms an RuvA(8)-RuvB(12)-Holliday junction (HJ) complex. HJ DNA is sandwiched between 2 RuvA tetramers; dsDNA enters through RuvA and exits via RuvB. An RuvB hexamer assembles on each DNA strand where it exits the tetramer. Each RuvB hexamer is contacted by two RuvA subunits (via domain III) on 2 adjacent RuvB subunits; this complex drives branch migration. In the full resolvosome a probable DNA-RuvA(4)-RuvB(12)-RuvC(2) complex forms which resolves the HJ.

Its subcellular location is the cytoplasm. In terms of biological role, the RuvA-RuvB-RuvC complex processes Holliday junction (HJ) DNA during genetic recombination and DNA repair, while the RuvA-RuvB complex plays an important role in the rescue of blocked DNA replication forks via replication fork reversal (RFR). RuvA specifically binds to HJ cruciform DNA, conferring on it an open structure. The RuvB hexamer acts as an ATP-dependent pump, pulling dsDNA into and through the RuvAB complex. HJ branch migration allows RuvC to scan DNA until it finds its consensus sequence, where it cleaves and resolves the cruciform DNA. This Nocardioides sp. (strain ATCC BAA-499 / JS614) protein is Holliday junction branch migration complex subunit RuvA.